The primary structure comprises 77 residues: U8-lycotoxin-Ls1n (77 aa).

An N-terminal signal peptide occupies residues 1–20; the sequence is MKLMIFTGLVLFAIVSLIEA. Residues 21–26 constitute a propeptide that is removed on maturation; it reads QAENEK.

The protein belongs to the neurotoxin 19 (CSTX) family. 08 (U8-Lctx) subfamily. In terms of processing, contains 4 disulfide bonds. As to expression, expressed by the venom gland.

It is found in the secreted. In Lycosa singoriensis (Wolf spider), this protein is U8-lycotoxin-Ls1n.